Consider the following 1555-residue polypeptide: MTSVGTTLIVKPANNSGGSDGNIKNNNNNNNNNNNNNNNNNNSNSGNNSNNNSFIDDQVLHTGYLTKQGGRIQNWKIRWFVLKRGTLSYYLSPINWEYTKPRGVIYLTKKTELKEVDHRNRRHCFAVNPNYISENQSIIQQQQNQPILRSSSDSVNNNNNNNNNNNNNNNNNNNNNNNNNNNNNNNNNNNNNNNNNNNNNNNNNNSKLYPNSTRIYLISAQTVFDKSKWIEMIKLAISSDNSQDSKLKRANHQLEKVKDLVFSNRKGSIPTFPSLLNRTIATESLNDLIKVHLSKKRFYFYHDNLTLPALSYIDSESPVNLQEIHHQHLILLQQQKEELNKKLKKIQQQNNIGGGGSGSNIANSANKINNKNNDKINGVGSGEDKNNNKGGGGDNNSQSSSSSVSPTTVSPSVSPLSSSPTKPPIILSKKPLPTPPRNISTSDNGSGTDSPFYNSAITRLPLISTSVGMVGPNGMVNITSMNTTTTTTTTTTTTAPTTTNTNTNIKPLPGIQQNKLQLIQNKDGGGGGGGVLKRTNPLLSTSAPSMAYNQLVANSGIIHKHQPKIVVFHLVRDSFQISNIGGCSFNFEILSPFDPNFTLNFIPSSGTIQKGDSLTVLVELMAYNHIETDIYSTLHIIGGMEFTLFCRIETDPYLPLFLKSCAGSVLPLEKQMKMESFMKKNPTMVKSIQELAHTLILDGRNIIPLHLSNNININNNNNNGGGGSGYNIGGGSNNSIGGSGSNNNSNVNISNGWNIENSNRRNSGGCLNLVGGSGGGGLINNNINNNNNNNNNNNNNNNNNNNNNNNNNNNNNNNNNNNNNNNNNNNNNNNNNGSGLLSSSPLITISNQNTPTPQARVKLSKYILNFQRNQKKNSVGDVESVKIYQLLTDKFLISNSGSADASFQFHFPSRGKKNDLFSLSLVPTNGTVSKGEWFYIKSTLTVFVETEISEMIQLIINQREVHHILITVKCENIHPGNKEIDLEKEVVLHERLGTGATGDIYRGLISQDNLNRHISNQDSSGSNSSGSGSGHNWLIARNPSNDIINKDAIIGSGPQIIVAVKKLHPLADPSPEMIQDFYNEVRVLSMFNHPNVVKYVGGCTKIANWSIVMEYVPGGNLMDVLANPVLVIPYKLVLRMALDIAKGLHYLHSLGILHLDMKSPNLLVSSLSTSAKVNIKVADFNTCINRSRITAGFFNRHTGSGDNNKVEKDSKKGTTLWMAPEVIRGAMYSEKCDVYSFAIIMWEMVTRKLPYSHIAFNCEVEDQVLKGLRPPIPMHCNKNYTDLMEQCWDDDPENRPYFDTIIHSISKMIESNDITEQKAKASFKGLRRTQSNSTLNLLQVQNNNNNSNNNNNNNNNNNNNNSNSNLNNCNNSSPNLGTNSANNDSGVSVLQTCSDIGVGSTGTNSGTSGTNSGFDSPVIVTKDYHLISNLQKLDLHSNDGSDTNGSQIGFKSDINSKKSSLEVHSKHKSKRFSYDGGSSRASINTLNNDSNLPFKFSPPSTPQSSFLQLKKLDKELKSNLESNAGTKHSFIRYKPSFTNVTSAKSKLNLNNNNNN.

Disordered stretches follow at residues 1–54 (MTSV…NNSF), 138–208 (IIQQ…NSKL), 342–452 (KLKK…DSPF), 486–508 (TTTTTTTTTAPTTTNTNTNIKPL), and 781–850 (NNIN…NQNT). 4 stretches are compositionally biased toward low complexity: residues 14-53 (NNSGGSDGNIKNNNNNNNNNNNNNNNNNNSNSGNNSNNNS), 138-205 (IIQQ…NNNN), 359-378 (SNIANSANKINNKNNDKING), and 395-431 (NNSQSSSSSVSPTTVSPSVSPLSSSPTKPPIILSKKP). A PH domain is found at 58 to 238 (QVLHTGYLTK…WIEMIKLAIS (181 aa)). A compositionally biased stretch (polar residues) spans 437 to 452 (RNISTSDNGSGTDSPF). Composition is skewed to low complexity over residues 486 to 504 (TTTTTTTTTAPTTTNTNTN) and 781 to 832 (NNIN…NNNN). Residues 833–850 (GSGLLSSSPLITISNQNT) show a composition bias toward polar residues. In terms of domain architecture, Protein kinase spans 986-1309 (VVLHERLGTG…TIIHSISKMI (324 aa)). 992 to 1000 (LGTGATGDI) lines the ATP pocket. A disordered region spans residues 1012–1031 (RHISNQDSSGSNSSGSGSGH). K1061 contributes to the ATP binding site. The Proton acceptor role is filled by D1156. A compositionally biased stretch (low complexity) spans 1340–1376 (VQNNNNNSNNNNNNNNNNNNNNSNSNLNNCNNSSPNL). Disordered stretches follow at residues 1340–1383 (VQNN…SANN) and 1457–1480 (KKSSLEVHSKHKSKRFSYDGGSSR).

This sequence belongs to the protein kinase superfamily. TKL Ser/Thr protein kinase family.

The catalysed reaction is L-seryl-[protein] + ATP = O-phospho-L-seryl-[protein] + ADP + H(+). It carries out the reaction L-threonyl-[protein] + ATP = O-phospho-L-threonyl-[protein] + ADP + H(+). This chain is Probable serine/threonine-protein kinase DDB_G0276181, found in Dictyostelium discoideum (Social amoeba).